We begin with the raw amino-acid sequence, 1075 residues long: Nuclear factor of activated T-cells, cytoplasmic 3 (1075 aa).

N-acetylthreonine is present on Thr2. A disordered region spans residues 18 to 37 (FGEDGAPAPPPPGSRPADLE). The segment at 109–114 (PSIQIT) is calcineurin-binding. The segment at 205–306 (LGSPLTSPGG…PGHSPRGSVT (102 aa)) is disordered. A run of 2 repeats spans residues 207–223 (SPLT…PGEE) and 236–252 (SPRQ…VTDE). Residues 207 to 308 (SPLTSPGGSP…HSPRGSVTED (102 aa)) form a 3 X SP repeats region. The segment covering 236–253 (SPRQSPCHSPRSSVTDEN) has biased composition (polar residues). Residues 256 to 270 (SPRPASGPSSRPTSP) are compositionally biased toward low complexity. A Nuclear localization signal motif is present at residues 273-275 (KRR). Residues 292-308 (SPVPSPGHSPRGSVTED) form repeat 3. Phosphoserine occurs at positions 344 and 372. One can recognise an RHD domain in the interval 415-596 (SSLPPLDWPL…IPVECSQRSA (182 aa)). Residues 444-451 (RAHYETEG) mediate DNA binding. The short motif at 686–688 (KRK) is the Nuclear localization signal element. Disordered regions lie at residues 711–739 (DLSS…SHDS) and 887–988 (SNTG…GLSA). 2 stretches are compositionally biased toward polar residues: residues 724–739 (AQTQ…SHDS) and 887–912 (SNTG…QLQP). Low complexity-rich tracts occupy residues 916–939 (GPSH…SSPL) and 949–967 (PMPY…SPAT). The segment covering 970-981 (HSGQHSTQAQST) has biased composition (polar residues). Positions 1032-1041 (TLDDVNEIIG) match the Nuclear export signal motif. The tract at residues 1049 to 1075 (VSQGAGVSRQAPLPSPESLDLGRSDGL) is disordered. A phosphoserine mark is found at Ser1063 and Ser1066.

NFATC proteins bind to DNA as monomers. Member of the multicomponent NFATC transcription complex that consists of at least two components, a pre-existing cytoplasmic component NFATC2 and an inducible nuclear component NFATC1. Other members such as NFATC4, or members of the activating protein-1 family, MAF, GATA4 and Cbp/p300 can also bind the complex. Component of a promoter-binding complex composed of STAT3, NFATC3 and NFATC4; complex formation is enhanced by calcineurin. Interacts with TRIM17; this interaction prevents NFATC3 nuclear localization. Interacts with and ubiquitinated by STUB1/CHIP; HSPA1A/HSP70 is required as a co-chaperone. Ubiquitinated by STUB1/CHIP, leading to proteasomal degradation. Post-translationally, phosphorylated by NFATC-kinase; dephosphorylated by calcineurin. In terms of tissue distribution, predominantly expressed in thymus and is also found in peripheral blood leukocytes and kidney. Predominantly expressed in skeletal muscle. Also found weakly expressed in the thymus, kidney, testis, spleen, prostate, ovary, small intestine, heart, placenta and pancreas. As to expression, expressed in thymus and kidney. In terms of tissue distribution, expressed in thymus and skeletal muscle.

It is found in the cytoplasm. It localises to the nucleus. Acts as a regulator of transcriptional activation. Binds to the TNFSF11/RANKL promoter region and promotes TNFSF11 transcription. Binding to the TNFSF11 promoter region is increased by high levels of Ca(2+) which induce NFATC3 expression and may lead to regulation of TNFSF11 expression in osteoblasts. Plays a role in promoting mesenteric arterial wall remodeling in response to the intermittent hypoxia-induced increase in EDN1 and ROCK signaling. As a result NFATC3 colocalizes with F-actin filaments, translocates to the nucleus and promotes transcription of the smooth muscle hypertrophy and differentiation marker ACTA2. Promotes lipopolysaccharide-induced apoptosis and hypertrophy in cardiomyocytes. Following JAK/STAT signaling activation and as part of a complex with NFATC4 and STAT3, binds to the alpha-beta E4 promoter region of CRYAB and activates transcription in cardiomyocytes. In conjunction with NFATC4, involved in embryonic heart development via maintenance of cardiomyocyte survival, proliferation and differentiation. Plays a role in the inducible expression of cytokine genes in T-cells, especially in the induction of the IL-2. Required for thymocyte maturation during DN3 to DN4 transition and during positive selection. Positively regulates macrophage-derived polymicrobial clearance, via binding to the promoter region and promoting transcription of NOS2 resulting in subsequent generation of nitric oxide. Involved in Ca(2+)-mediated transcriptional responses upon Ca(2+) influx via ORAI1 CRAC channels. The sequence is that of Nuclear factor of activated T-cells, cytoplasmic 3 from Homo sapiens (Human).